The primary structure comprises 1070 residues: Carbamoyl phosphate synthase large chain (1070 aa).

The carboxyphosphate synthetic domain stretch occupies residues methionine 1–glutamate 401. ATP contacts are provided by arginine 129, arginine 169, glycine 175, glycine 176, lysine 208, isoleucine 210, glutamate 215, glycine 241, isoleucine 242, histidine 243, glutamine 284, and glutamate 298. Residues arginine 133–valine 327 enclose the ATP-grasp 1 domain. Positions 284, 298, and 300 each coordinate Mg(2+). The Mn(2+) site is built by glutamine 284, glutamate 298, and asparagine 300. Residues isoleucine 402 to serine 546 are oligomerization domain. The interval threonine 547–glycine 929 is carbamoyl phosphate synthetic domain. One can recognise an ATP-grasp 2 domain in the interval glutamate 671 to leucine 861. ATP-binding residues include arginine 707, arginine 746, valine 748, glutamate 752, glycine 777, valine 778, histidine 779, serine 780, glutamine 820, and glutamate 832. Mg(2+) is bound by residues glutamine 820, glutamate 832, and asparagine 834. Positions 820, 832, and 834 each coordinate Mn(2+). In terms of domain architecture, MGS-like spans threonine 930–valine 1070. The tract at residues threonine 930–valine 1070 is allosteric domain.

The protein belongs to the CarB family. In terms of assembly, composed of two chains; the small (or glutamine) chain promotes the hydrolysis of glutamine to ammonia, which is used by the large (or ammonia) chain to synthesize carbamoyl phosphate. Tetramer of heterodimers (alpha,beta)4. Mg(2+) serves as cofactor. It depends on Mn(2+) as a cofactor.

It catalyses the reaction hydrogencarbonate + L-glutamine + 2 ATP + H2O = carbamoyl phosphate + L-glutamate + 2 ADP + phosphate + 2 H(+). The catalysed reaction is hydrogencarbonate + NH4(+) + 2 ATP = carbamoyl phosphate + 2 ADP + phosphate + 2 H(+). It functions in the pathway amino-acid biosynthesis; L-arginine biosynthesis; carbamoyl phosphate from bicarbonate: step 1/1. The protein operates within pyrimidine metabolism; UMP biosynthesis via de novo pathway; (S)-dihydroorotate from bicarbonate: step 1/3. Its function is as follows. Large subunit of the glutamine-dependent carbamoyl phosphate synthetase (CPSase). CPSase catalyzes the formation of carbamoyl phosphate from the ammonia moiety of glutamine, carbonate, and phosphate donated by ATP, constituting the first step of 2 biosynthetic pathways, one leading to arginine and/or urea and the other to pyrimidine nucleotides. The large subunit (synthetase) binds the substrates ammonia (free or transferred from glutamine from the small subunit), hydrogencarbonate and ATP and carries out an ATP-coupled ligase reaction, activating hydrogencarbonate by forming carboxy phosphate which reacts with ammonia to form carbamoyl phosphate. This chain is Carbamoyl phosphate synthase large chain, found in Listeria monocytogenes serotype 4b (strain CLIP80459).